Consider the following 214-residue polypeptide: Pyridoxine/pyridoxamine 5'-phosphate oxidase (214 aa).

Substrate contacts are provided by residues 10-13 (RLNY) and K68. Residues 63-68 (RMVLLK), 78-79 (YT), K85, and Q107 contribute to the FMN site. Y125, R129, and S133 together coordinate substrate. FMN is bound by residues 142–143 (QS) and W187. Position 193 to 195 (193 to 195 (RLH)) interacts with substrate. R197 is an FMN binding site.

Belongs to the pyridoxamine 5'-phosphate oxidase family. As to quaternary structure, homodimer. FMN is required as a cofactor.

It catalyses the reaction pyridoxamine 5'-phosphate + O2 + H2O = pyridoxal 5'-phosphate + H2O2 + NH4(+). The enzyme catalyses pyridoxine 5'-phosphate + O2 = pyridoxal 5'-phosphate + H2O2. It functions in the pathway cofactor metabolism; pyridoxal 5'-phosphate salvage; pyridoxal 5'-phosphate from pyridoxamine 5'-phosphate: step 1/1. The protein operates within cofactor metabolism; pyridoxal 5'-phosphate salvage; pyridoxal 5'-phosphate from pyridoxine 5'-phosphate: step 1/1. Functionally, catalyzes the oxidation of either pyridoxine 5'-phosphate (PNP) or pyridoxamine 5'-phosphate (PMP) into pyridoxal 5'-phosphate (PLP). The protein is Pyridoxine/pyridoxamine 5'-phosphate oxidase of Synechocystis sp. (strain ATCC 27184 / PCC 6803 / Kazusa).